Reading from the N-terminus, the 1187-residue chain is Myelin transcription factor 1-like protein (1187 aa).

Residues 1–22 (MDVDSEEKRHRTRSKGVRVPVE) are disordered. Residues 22-65 (EPAIQELFSCPTPGCDGSGHVSGKYARHRSVYGCPLAKKRKTQD) form a CCHHC-type 1 zinc finger. Positions 31, 36, 49, and 55 each coordinate Zn(2+). Disordered regions lie at residues 56 to 178 (PLAK…QMSC) and 221 to 248 (RTESEMNSNTSNSLEDDSDKNENLGRKS). Residues 89–172 (ECYESDGTED…EEEEEEEENE (84 aa)) are compositionally biased toward acidic residues. Ser251 is modified (phosphoserine). Disordered stretches follow at residues 343–422 (SETN…DRSE) and 450–514 (REKM…GCDG). Polar residues predominate over residues 344-358 (ETNPQDRSQPPNMSV). Composition is skewed to basic and acidic residues over residues 362 to 377 (VRQEDDFPGRTPDRSY), 401 to 412 (AKEDGCHERDDD), 450 to 488 (REKMAMDAGRRDNLRSYEDQSPRQLAGEDRKSKSSDSHV), and 496 to 506 (DPSRTEKRESK). CCHHC-type zinc fingers lie at residues 498–541 (SRTE…PPEI) and 542–585 (LAMH…KLAK). Positions 507, 512, 525, 531, 551, 556, 569, and 575 each coordinate Zn(2+). Residues 686 to 710 (ASPSSSTTSSYAPSSSSNLSCGGGS) form a disordered region. 3 consecutive CCHHC-type zinc fingers follow at residues 897-940 (LATS…GIRI), 946-989 (DKED…QKDG), and 999-1042 (KSVK…MKKA). 12 residues coordinate Zn(2+): Cys906, Cys911, His924, Cys930, Cys955, Cys960, His973, Cys979, Cys1008, Cys1013, His1026, and Cys1032. A coiled-coil region spans residues 1058-1132 (NGIENDEEIK…ANLSQSLIHS (75 aa)).

The protein belongs to the MYT1 family. Interacts with SIN3B. In terms of tissue distribution, brain.

The protein resides in the nucleus. It is found in the chromosome. In terms of biological role, transcription factor that plays a key role in neuronal differentiation by specifically repressing expression of non-neuronal genes during neuron differentiation. In contrast to other transcription repressors that inhibit specific lineages, mediates repression of multiple differentiation programs. Also represses expression of negative regulators of neurogenesis, such as members of the Notch signaling pathway, including HES1. The combination of three transcription factors, ASCL1, POU3F2/BRN2 and MYT1L, is sufficient to reprogram fibroblasts and other somatic cells into induced neuronal (iN) cells in vitro. Directly binds the 5'-AAGTT-3' core motif present on the promoter of target genes and represses transcription by recruiting a multiprotein complex containing SIN3B. The 5'-AAGTT-3' core motif is absent from the promoter of neural genes. This Mus musculus (Mouse) protein is Myelin transcription factor 1-like protein.